We begin with the raw amino-acid sequence, 167 residues long: Gametocyte-specific factor 1 (167 aa).

CHHC U11-48K-type zinc fingers lie at residues 14–41 (LLQCPYDKNHQIRACRFPYHLIKCRKNH) and 48–75 (LATCPFNARHQVPRAEISHHISSCDDKS). Residues cysteine 17, histidine 23, histidine 33, cysteine 37, cysteine 51, histidine 57, histidine 67, and cysteine 71 each contribute to the Zn(2+) site.

This sequence belongs to the UPF0224 (FAM112) family.

It is found in the cytoplasm. In terms of biological role, required for spermatogenesis and is involved in the suppression of retrotransposon transcription in male germ cells. The protein is Gametocyte-specific factor 1 (GTSF1) of Bos taurus (Bovine).